The following is a 683-amino-acid chain: Phenoloxidase 3 (683 aa).

Residues 1-48 constitute a propeptide that is removed on maturation; it reads MADKKNLLLLFDHPTEPVFMDKGGNGTVFDVPASYVTDRYNKMCKKVQ. N25 carries N-linked (GlcNAc...) asparagine glycosylation. Cu cation-binding residues include H209, H213, and H239. The Proton acceptor role is filled by E351. The N-linked (GlcNAc...) asparagine glycan is linked to N358. Cu cation-binding residues include H366, H370, and H406. N-linked (GlcNAc...) asparagine glycans are attached at residues N492 and N514. Cystine bridges form between C574–C617 and C576–C624.

This sequence belongs to the tyrosinase family. Cu(2+) is required as a cofactor. In terms of processing, upon activation, a trypsin type protease cleaves prophenol oxidase to yield the active enzyme.

Its subcellular location is the secreted. The enzyme catalyses 2 L-dopa + O2 = 2 L-dopaquinone + 2 H2O. It catalyses the reaction L-tyrosine + O2 = L-dopaquinone + H2O. In terms of biological role, this is a copper-containing oxidase that functions in the formation of pigments such as melanins and other polyphenolic compounds. Catalyzes the rate-limiting conversions of tyrosine to DOPA, DOPA to DOPA-quinone and possibly 5,6 dihydroxyindole to indole-5'6 quinone. This is Phenoloxidase 3 (PPO3) from Drosophila erecta (Fruit fly).